The primary structure comprises 222 residues: uncharacterized protein (222 aa).

Residues 1–27 (MSFTRRKFVLGMGTVIFFTGSASSLLA) constitute a signal peptide (tat-type signal). 3 4Fe-4S ferredoxin-type domains span residues 37 to 67 (YAMIHDESRCNGCNICARACRKTNHVPAQGS), 83 to 114 (TQYHFFRQSCQHCEDAPCIDVCPTGASWRDEQ), and 115 to 144 (GIVRVEKSQCIGCSYCIGACPYQVRYLNPV). C46, C49, C52, C56, C92, C95, C100, C104, C124, C127, C130, C134, C151, C154, C167, and C171 together coordinate [4Fe-4S] cluster.

Post-translationally, exported by the Tat system. The position of the signal peptide cleavage has not been experimentally proven. Can also be exported by the Sec system.

This is an uncharacterized protein from Escherichia coli (strain K12).